A 334-amino-acid chain; its full sequence is Nucleoid-associated protein YPK_2796 (334 aa).

Belongs to the YejK family.

The protein resides in the cytoplasm. It localises to the nucleoid. This Yersinia pseudotuberculosis serotype O:3 (strain YPIII) protein is Nucleoid-associated protein YPK_2796.